The chain runs to 222 residues: ATP-dependent dethiobiotin synthetase BioD (222 aa).

12-17 (DVGKTI) lines the ATP pocket. Threonine 16 contributes to the Mg(2+) binding site. Lysine 37 is a catalytic residue. Threonine 41 provides a ligand contact to substrate. Residues aspartate 49, 107–110 (EGAG), 167–168 (GS), and 197–199 (AEG) each bind ATP. Residues aspartate 49 and glutamate 107 each contribute to the Mg(2+) site.

The protein belongs to the dethiobiotin synthetase family. As to quaternary structure, homodimer. Mg(2+) is required as a cofactor.

The protein resides in the cytoplasm. The enzyme catalyses (7R,8S)-7,8-diammoniononanoate + CO2 + ATP = (4R,5S)-dethiobiotin + ADP + phosphate + 3 H(+). Its pathway is cofactor biosynthesis; biotin biosynthesis; biotin from 7,8-diaminononanoate: step 1/2. In terms of biological role, catalyzes a mechanistically unusual reaction, the ATP-dependent insertion of CO2 between the N7 and N8 nitrogen atoms of 7,8-diaminopelargonic acid (DAPA, also called 7,8-diammoniononanoate) to form a ureido ring. The sequence is that of ATP-dependent dethiobiotin synthetase BioD from Corynebacterium diphtheriae (strain ATCC 700971 / NCTC 13129 / Biotype gravis).